The sequence spans 329 residues: Putative 1-aminocyclopropane-1-carboxylate deaminase (329 aa).

Lys-54 is modified (N6-(pyridoxal phosphate)lysine).

It belongs to the ACC deaminase/D-cysteine desulfhydrase family. Requires pyridoxal 5'-phosphate as cofactor.

It carries out the reaction 1-aminocyclopropane-1-carboxylate + H2O = 2-oxobutanoate + NH4(+). The protein is Putative 1-aminocyclopropane-1-carboxylate deaminase of Pyrococcus furiosus (strain ATCC 43587 / DSM 3638 / JCM 8422 / Vc1).